Reading from the N-terminus, the 135-residue chain is Ribonuclease VapC35 (135 aa).

The PINc domain maps to 2–123; that stretch reads IYLETSALVK…DNRLKEAAEA (122 aa). Glu-5 and Asp-91 together coordinate Mg(2+).

This sequence belongs to the PINc/VapC protein family. It depends on Mg(2+) as a cofactor.

In terms of biological role, toxic component of a type II toxin-antitoxin (TA) system. An RNase. Its toxic effect is neutralized by coexpression with cognate antitoxin VapB35. The polypeptide is Ribonuclease VapC35 (Mycobacterium tuberculosis (strain CDC 1551 / Oshkosh)).